The sequence spans 492 residues: Cytochrome P450 2B12 (492 aa).

At Ser-129 the chain carries Phosphoserine. Cys-437 is a binding site for heme.

Belongs to the cytochrome P450 family. Requires heme as cofactor. In terms of tissue distribution, preputial gland, but not in liver.

The protein resides in the endoplasmic reticulum membrane. It is found in the microsome membrane. The catalysed reaction is an organic molecule + reduced [NADPH--hemoprotein reductase] + O2 = an alcohol + oxidized [NADPH--hemoprotein reductase] + H2O + H(+). Functionally, cytochromes P450 are a group of heme-thiolate monooxygenases. In liver microsomes, this enzyme is involved in an NADPH-dependent electron transport pathway. This isozyme seems responsible for metabolism of 2,2',4,4',5,5'-hexachlorobiphenyl. The chain is Cytochrome P450 2B12 (Cyp2b12) from Rattus norvegicus (Rat).